We begin with the raw amino-acid sequence, 386 residues long: Orphan methyltransferase M.SssI (386 aa).

Residues 11–386 form the SAM-dependent MTase C5-type domain; sequence LRVFEAFAGI…LEAIIDKIGG (376 aa). Residue cysteine 141 is part of the active site.

This sequence belongs to the class I-like SAM-binding methyltransferase superfamily. C5-methyltransferase family.

It catalyses the reaction a 2'-deoxycytidine in DNA + S-adenosyl-L-methionine = a 5-methyl-2'-deoxycytidine in DNA + S-adenosyl-L-homocysteine + H(+). In terms of biological role, this de novo methylase acts completely and exclusively on CG residues in DNA; methylates unmethylated and hemi-methylated DNA. The sequence is that of Orphan methyltransferase M.SssI (sssIM) from Spiroplasma monobiae (strain ATCC 33825 / MQ-1).